Consider the following 143-residue polypeptide: MKFGIVVSEWNANITGALLDGAVKTLKKHGAKEENILVKTVPGSFELTFGANQMMENSDIDAIIIIGCVIKGDTPHFDYVCMGVTQGVAQLNATGDIPVIYGLITTNTMEQAEDRAGGKLGNKGDECAITAIKMIDFVWSLNK.

Residues Trp10, 44–46, and 68–70 contribute to the 5-amino-6-(D-ribitylamino)uracil site; these read SFE and CVI. 73 to 74 serves as a coordination point for (2S)-2-hydroxy-3-oxobutyl phosphate; that stretch reads DT. The Proton donor role is filled by His76. A 5-amino-6-(D-ribitylamino)uracil-binding site is contributed by Tyr101. Arg115 contributes to the (2S)-2-hydroxy-3-oxobutyl phosphate binding site.

The protein belongs to the DMRL synthase family.

The catalysed reaction is (2S)-2-hydroxy-3-oxobutyl phosphate + 5-amino-6-(D-ribitylamino)uracil = 6,7-dimethyl-8-(1-D-ribityl)lumazine + phosphate + 2 H2O + H(+). It participates in cofactor biosynthesis; riboflavin biosynthesis; riboflavin from 2-hydroxy-3-oxobutyl phosphate and 5-amino-6-(D-ribitylamino)uracil: step 1/2. Functionally, catalyzes the formation of 6,7-dimethyl-8-ribityllumazine by condensation of 5-amino-6-(D-ribitylamino)uracil with 3,4-dihydroxy-2-butanone 4-phosphate. This is the penultimate step in the biosynthesis of riboflavin. This is 6,7-dimethyl-8-ribityllumazine synthase from Bacteroides fragilis (strain YCH46).